The primary structure comprises 257 residues: MLRGCGEVGAVDCSPEQLNKHLKMVPGGRKHSGKSGKPPLIDQPKKAFDFEKEDKDLSGSEEDAVDEKTQVFDKHGKKRSAGIIEDVGGEVQNMLEKFGADINKALLAKKKRIEMYTKASFKASNQKIEQIWKTQQEEIQKLNNEYSQQFLSVLQQWELDMQKFEEQGEKLTNLFRQQQKIFQQTRIVQSQRMKAIKQLHEQFIKSLEDVEKNNDNLFTGTQSELKKEMAMLQKKVMMETQQQEMANVRKSLQSMLF.

Position 14 is a phosphoserine (Ser14). Residues 23–34 show a composition bias toward basic residues; that stretch reads KMVPGGRKHSGK. Positions 23–66 are disordered; it reads KMVPGGRKHSGKSGKPPLIDQPKKAFDFEKEDKDLSGSEEDAVD. A compositionally biased stretch (basic and acidic residues) spans 43–58; sequence QPKKAFDFEKEDKDLS. Ser58 and Ser60 each carry phosphoserine. The interval 74 to 79 is interaction with DNA; that stretch reads KHGKKR. At Ser80 the chain carries Phosphoserine. A coiled-coil region spans residues 87–244; it reads VGGEVQNMLE…KVMMETQQQE (158 aa). The interval 90-95 is important for oligomerization and fiber formation; sequence EVQNML. An interaction with DNA region spans residues 109 to 112; the sequence is KKKR. Residues 109 to 112 carry the Nuclear localization signal motif; sequence KKKR. Position 221 is a phosphothreonine (Thr221). An important for oligomerization and fiber formation region spans residues 252-257; the sequence is LQSMLF.

It belongs to the XLR/SYCP3 family. In terms of assembly, component of the lateral elements of synaptonemal complexes. Homotetramer; the tetrameric helix bundles assemble end to end into long homopolimeric fibers (in vitro). Homooligomer that assembles into fibers; the fibers exhibit a transversal striation with a periodicity of about 20 nm (in vitro). Interacts with SYCP2. Forms a complex with EWSR1, PRDM9, REC8 and SYCP1; complex formation is dependent of phosphorylated form of REC8 and requires PRDM9 bound to hotspot DNA; EWSR1 joins PRDM9 with the chromosomal axis through REC8. Phosphorylated. Detected in spermatocytes and testis (at protein level). Testis-specific.

It localises to the nucleus. The protein localises to the chromosome. The protein resides in the centromere. In terms of biological role, component of the synaptonemal complexes (SCS), formed between homologous chromosomes during meiotic prophase. Required for centromere pairing during meiosis in male germ cells. Required for normal meiosis during spermatogenesis and male fertility. Plays a lesser role in female fertility. Required for efficient phosphorylation of HORMAD1 and HORMAD2. This Rattus norvegicus (Rat) protein is Synaptonemal complex protein 3 (Sycp3).